A 178-amino-acid chain; its full sequence is Peptide deformylase (178 aa).

The Fe cation site is built by cysteine 102 and histidine 144. Residue glutamate 145 is part of the active site. Histidine 148 provides a ligand contact to Fe cation.

It belongs to the polypeptide deformylase family. Fe(2+) serves as cofactor.

The enzyme catalyses N-terminal N-formyl-L-methionyl-[peptide] + H2O = N-terminal L-methionyl-[peptide] + formate. Functionally, removes the formyl group from the N-terminal Met of newly synthesized proteins. Requires at least a dipeptide for an efficient rate of reaction. N-terminal L-methionine is a prerequisite for activity but the enzyme has broad specificity at other positions. This Leptospira borgpetersenii serovar Hardjo-bovis (strain JB197) protein is Peptide deformylase.